The sequence spans 274 residues: Merozoite surface protein 2 (274 aa).

The N-terminal stretch at 1-20 (MKVIKTLSIINFFIFVTFNI) is a signal peptide. Asn-22 and Asn-36 each carry an N-linked (GlcNAc...) asparagine glycan. Positions 43–234 (MAESKPPTGT…SDSQKECTDG (192 aa)) are disordered. The tract at residues 44–200 (AESKPPTGTG…EQTESPELQS (157 aa)) is polymorphic region. 2 consecutive repeat copies span residues 53-62 (GASGSAGSGA) and 63-72 (GASGSAGSGD). The 2 X 10 AA tandem repeats of G-A-S-G-S-A-G-S-G-[AD] stretch occupies residues 53–72 (GASGSAGSGAGASGSAGSGD). Residues 53–72 (GASGSAGSGAGASGSAGSGD) are compositionally biased toward gly residues. The segment covering 91–121 (SSSTPATTTTTTTTTTTTTTNDAEASTSTSS) has biased composition (low complexity). Composition is skewed to polar residues over residues 122–131 (ENPNHNNAET), 140–167 (QKSN…NVPP), and 174–202 (KSPT…QSAP). Residue Asn-151 is glycosylated (N-linked (GlcNAc...) asparagine). Asn-223 carries an N-linked (GlcNAc...) asparagine glycan. Cys-231 and Cys-239 are oxidised to a cystine. A glycan (N-linked (GlcNAc...) asparagine) is linked at Asn-248. Asn-248 carries GPI-anchor amidated asparagine lipidation. Positions 249-274 (SSNIASINKFVVLISAKLVLSFAIFI) are cleaved as a propeptide — removed in mature form.

It is found in the cell membrane. Functionally, may play a role in the merozoite attachment to the erythrocyte. The sequence is that of Merozoite surface protein 2 from Plasmodium falciparum (isolate kf1916).